Reading from the N-terminus, the 273-residue chain is Ribosomal RNA small subunit methyltransferase A (273 aa).

Residues asparagine 18, leucine 20, glycine 45, glutamate 66, aspartate 91, and asparagine 113 each contribute to the S-adenosyl-L-methionine site.

This sequence belongs to the class I-like SAM-binding methyltransferase superfamily. rRNA adenine N(6)-methyltransferase family. RsmA subfamily.

It is found in the cytoplasm. The catalysed reaction is adenosine(1518)/adenosine(1519) in 16S rRNA + 4 S-adenosyl-L-methionine = N(6)-dimethyladenosine(1518)/N(6)-dimethyladenosine(1519) in 16S rRNA + 4 S-adenosyl-L-homocysteine + 4 H(+). In terms of biological role, specifically dimethylates two adjacent adenosines (A1518 and A1519) in the loop of a conserved hairpin near the 3'-end of 16S rRNA in the 30S particle. May play a critical role in biogenesis of 30S subunits. The protein is Ribosomal RNA small subunit methyltransferase A of Escherichia coli O17:K52:H18 (strain UMN026 / ExPEC).